A 186-amino-acid chain; its full sequence is DNA damage up-regulated protein (186 aa).

Positions 147 to 166 (ATENGEGCRPARDPASSPSS) are disordered.

Interacts with DNA damage response proteins ATR, H2AX, PCNA, RAD18 and RAD51C. Forms a complex with H2AX and RAD18 following DDUP phosphorylation. Post-translationally, phosphorylated in an ATR-dependent manner; phosphorylation is required for interaction with H2AX and RAD18 and for DDUP-mediated DNA damage repair.

The protein resides in the nucleus. The protein localises to the chromosome. Its function is as follows. Promotes DNA damage repair through both homologous recombination repair (HRR) and post-replication repair (PRR) mechanisms. Enhances the retention of DNA damage response protein RAD18 at sites of DNA damage. This allows for HRR via association of RAD18 with RAD51C and for PRR via RAD18-mediated promotion of PCNA monoubiquitination. This Homo sapiens (Human) protein is DNA damage up-regulated protein.